The following is a 185-amino-acid chain: DNA-directed RNA polymerase 22 kDa subunit (185 aa).

It belongs to the poxviridae DNA-directed RNA polymerase 22 kDa subunit family. The DNA-dependent RNA polymerase used for intermediate and late genes expression consists of eight subunits Rpo30/OPG66, Rpo7/OPG90, Rpo22/OPG103, Rpo147/OPG105, Rpo18/OPG119, Rpo19/OPG131, Rpo132/OPG151 and Rpo35/OPG156. The same holoenzyme, with the addition of the transcription-specificity factor OPG109, is used for early gene expression.

Its subcellular location is the virion. It catalyses the reaction RNA(n) + a ribonucleoside 5'-triphosphate = RNA(n+1) + diphosphate. Its function is as follows. Part of the DNA-dependent RNA polymerase which catalyzes the transcription of viral DNA into RNA using the four ribonucleoside triphosphates as substrates. Responsible for the transcription of early, intermediate and late genes. DNA-dependent RNA polymerase associates with the early transcription factor (ETF), itself composed of OPG118 and OPG133, thereby allowing the early genes transcription. Late transcription, and probably also intermediate transcription, require newly synthesized RNA polymerase. This Cynomys gunnisoni (Gunnison's prairie dog) protein is DNA-directed RNA polymerase 22 kDa subunit (OPG103).